The primary structure comprises 557 residues: Ribonuclease J 2 (557 aa).

The Zn(2+) site is built by histidine 76, histidine 78, histidine 144, and glutamate 166. Histidine 366–histidine 370 serves as a coordination point for substrate.

Belongs to the metallo-beta-lactamase superfamily. RNA-metabolizing metallo-beta-lactamase-like family. Bacterial RNase J subfamily. As to quaternary structure, homodimer, may be a subunit of the RNA degradosome. Requires Zn(2+) as cofactor.

Its subcellular location is the cytoplasm. An RNase that has 5'-3' exonuclease and possibly endoonuclease activity. Involved in maturation of rRNA and in some organisms also mRNA maturation and/or decay. This is Ribonuclease J 2 from Staphylococcus saprophyticus subsp. saprophyticus (strain ATCC 15305 / DSM 20229 / NCIMB 8711 / NCTC 7292 / S-41).